We begin with the raw amino-acid sequence, 484 residues long: Nuclear rim protein 1 (484 aa).

S3 is modified (phosphoserine). The next 2 helical transmembrane spans lie at 145–165 and 237–257; these read FTIFILLSLNLYVSCKFMFGY and IPTNFIINLFVSFSPTAIVFL. The disordered stretch occupies residues 416–457; sequence SSNENLEKGGAFLPNQDQNRPSKSLSPLRKTPLSARQKRFEG. S417 carries the phosphoserine modification. The span at 430 to 440 shows a compositional bias: polar residues; it reads NQDQNRPSKSL. S474 carries the post-translational modification Phosphoserine.

Belongs to the NUR1 family. As to quaternary structure, interacts with CSM1.

The protein resides in the nucleus membrane. In terms of biological role, member of a perinuclear network that controls recombination at multiple loci to maintain genome stability. Required for rDNA repeat stability. This Saccharomyces cerevisiae (strain JAY291) (Baker's yeast) protein is Nuclear rim protein 1 (NUR1).